Here is a 344-residue protein sequence, read N- to C-terminus: Acireductone dioxygenase (344 aa).

Residues H92, H94, E98, and H137 each contribute to the Fe(2+) site. H92, H94, E98, and H137 together coordinate Ni(2+).

Belongs to the acireductone dioxygenase (ARD) family. Fe(2+) is required as a cofactor. The cofactor is Ni(2+).

Its subcellular location is the cytoplasm. The protein localises to the nucleus. The enzyme catalyses 1,2-dihydroxy-5-(methylsulfanyl)pent-1-en-3-one + O2 = 4-methylsulfanyl-2-oxobutanoate + formate + 2 H(+). The catalysed reaction is 1,2-dihydroxy-5-(methylsulfanyl)pent-1-en-3-one + O2 = 3-(methylsulfanyl)propanoate + CO + formate + 2 H(+). The protein operates within amino-acid biosynthesis; L-methionine biosynthesis via salvage pathway; L-methionine from S-methyl-5-thio-alpha-D-ribose 1-phosphate: step 5/6. In terms of biological role, catalyzes 2 different reactions between oxygen and the acireductone 1,2-dihydroxy-3-keto-5-methylthiopentene (DHK-MTPene) depending upon the metal bound in the active site. Fe-containing acireductone dioxygenase (Fe-ARD) produces formate and 2-keto-4-methylthiobutyrate (KMTB), the alpha-ketoacid precursor of methionine in the methionine recycle pathway. Ni-containing acireductone dioxygenase (Ni-ARD) produces methylthiopropionate, carbon monoxide and formate, and does not lie on the methionine recycle pathway. The sequence is that of Acireductone dioxygenase from Leishmania braziliensis.